The sequence spans 405 residues: Prostaglandin E2 receptor EP1 subtype (405 aa).

Over 1–39 the chain is Extracellular; sequence MSPYGLNLSLVDEATTCVTPRVPNTSVVLPTGGNGTSPA. N7, N24, and N34 each carry an N-linked (GlcNAc...) asparagine glycan. A helical transmembrane segment spans residues 40–62; that stretch reads LPIFSMTLGAVSNVLALALLAQV. Residues 63–80 lie on the Cytoplasmic side of the membrane; it reads AGRLRRRRSTATFLLFVA. A helical transmembrane segment spans residues 81–99; sequence SLLAIDLAGHVIPGALVLR. Residues 100–113 lie on the Extracellular side of the membrane; that stretch reads LYTAGRAPAGGACH. C112 and C190 form a disulfide bridge. Residues 114–135 traverse the membrane as a helical segment; it reads FLGGCMVFFGLCPLLLGCGMAV. At 136–157 the chain is on the cytoplasmic side; that stretch reads ERCVGVTQPLIHAARVSVARAR. Residues 158–179 form a helical membrane-spanning segment; sequence LALALLAAMALAVALLPLVHVG. Residues 180 to 202 lie on the Extracellular side of the membrane; the sequence is HYELQYPGTWCFISLGPPGGWRQ. Residues 203–228 traverse the membrane as a helical segment; sequence ALLAGLFAGLGLAALLAALVCNTLSG. Over 229 to 301 the chain is Cytoplasmic; sequence LALLRARWRR…HAHDVEMVGQ (73 aa). Residues 302 to 323 form a helical membrane-spanning segment; sequence LVGIMVVSCICWSPLLVLVVLA. Over 324 to 337 the chain is Extracellular; the sequence is IGGWNSNSLQRPLF. A helical transmembrane segment spans residues 338 to 357; it reads LAVRLASWNQILDPWVYILL. Over 358–405 the chain is Cytoplasmic; it reads RQAMLRQLLRLLPLRVSAKGGPTELSLTKSAWEASSLRSSRHSGFSHL.

Belongs to the G-protein coupled receptor 1 family. In terms of processing, phosphorylated. As to expression, highly abundant in kidney and lung. Found in a lesser extent in spleen, colon, and thymus. Also expressed in uterine myometrium and endometrium.

It localises to the cell membrane. Its function is as follows. Receptor for prostaglandin E2 (PGE2). The activity of this receptor is mediated by G(q) proteins which activate a phosphatidylinositol-calcium second messenger system. May play a role as an important modulator of renal function. Implicated the smooth muscle contractile response to PGE2 in various tissues. Isoform 1 and isoform 2 have identical ligand binding properties, but isoform 2 lacks coupling to calcium mobilization and may therefore attenuate the action of PGE2 on tissues. This is Prostaglandin E2 receptor EP1 subtype (Ptger1) from Rattus norvegicus (Rat).